Here is a 311-residue protein sequence, read N- to C-terminus: Methionyl-tRNA formyltransferase (311 aa).

Residue 112–115 (SLLP) participates in (6S)-5,6,7,8-tetrahydrofolate binding.

It belongs to the Fmt family.

It catalyses the reaction L-methionyl-tRNA(fMet) + (6R)-10-formyltetrahydrofolate = N-formyl-L-methionyl-tRNA(fMet) + (6S)-5,6,7,8-tetrahydrofolate + H(+). Its function is as follows. Attaches a formyl group to the free amino group of methionyl-tRNA(fMet). The formyl group appears to play a dual role in the initiator identity of N-formylmethionyl-tRNA by promoting its recognition by IF2 and preventing the misappropriation of this tRNA by the elongation apparatus. The chain is Methionyl-tRNA formyltransferase from Agrobacterium fabrum (strain C58 / ATCC 33970) (Agrobacterium tumefaciens (strain C58)).